Consider the following 523-residue polypeptide: Heparanase (523 aa).

Residues 1-18 (MLVLLLLVLLLAVPPRRT) form the signal peptide. Residues 42 to 44 (DAS), Thr-77, and 137 to 141 (KKHKN) contribute to the heparan sulfate group site. N-linked (GlcNAc...) asparagine glycosylation is found at Asn-141 and Asn-196. The Proton donor role is filled by Glu-204. Heparan sulfate group is bound by residues 250–260 (QPRKHTQHLLR), His-276, and Arg-283. Positions 268 to 397 (KAIDSVTWHH…LLYKRLVGTR (130 aa)) are required for heterodimerization with the heparanase 8 kDa subunit. Glu-323 functions as the Nucleophile in the catalytic mechanism. Residues 328–330 (YGG) and 369–371 (GSY) contribute to the heparan sulfate group site. Cysteines 417 and 522 form a disulfide. 2 N-linked (GlcNAc...) asparagine glycosylation sites follow: Asn-436 and Asn-439. The interval 507 to 523 (FSYGFYVIRNAKAIACI) is required for transferring proheparanase to the Golgi apparatus, secretion and subsequent enzyme activity and for enhancement of PKB/AKT1 phosphorylation.

It belongs to the glycosyl hydrolase 79 family. In terms of assembly, heterodimer; the active enzyme is a heterodimer of the 60 kDa and 45 kDa proteolytic products. Post-translationally, N-glycosylated. In terms of processing, proteolytically cleaved to produce a 60 kDa and a 45 kDa product.

It localises to the secreted. The catalysed reaction is endohydrolysis of (1-&gt;4)-beta-D-glycosidic bonds of heparan sulfate chains in heparan sulfate proteoglycan.. Its function is as follows. Endoglycosidase that cleaves heparan sulfate proteoglycans (HSPGs) into heparan sulfate side chains and core proteoglycans. Participates in extracellular matrix (ECM) degradation and remodeling. Selectively cleaves the linkage between a glucuronic acid unit and an N-sulfo glucosamine unit carrying either a 3-O-sulfo or a 6-O-sulfo group. Can also cleave the linkage between a glucuronic acid unit and an N-sulfo glucosamine unit carrying a 2-O-sulfo group, but not linkages between a glucuronic acid unit and a 2-O-sulfated iduronic acid moiety. Increases cell adhesion to the extracellular matrix (ECM), independent of its enzymatic activity. In Gallus gallus (Chicken), this protein is Heparanase (HPSE).